The primary structure comprises 322 residues: Arginase (322 aa).

Residues H113, D141, H143, and D145 each coordinate Mn(2+). Substrate-binding positions include 143–147 (HADIN), 154–156 (SGN), and D200. Mn(2+) is bound by residues D247 and D249. Residues T261 and E292 each coordinate substrate.

This sequence belongs to the arginase family. In terms of assembly, homotrimer. Requires Mn(2+) as cofactor.

It catalyses the reaction L-arginine + H2O = urea + L-ornithine. Its pathway is nitrogen metabolism; urea cycle; L-ornithine and urea from L-arginine: step 1/1. This is Arginase (ARG) from Coccidioides posadasii (strain C735) (Valley fever fungus).